A 430-amino-acid chain; its full sequence is Bifunctional protein GlmU (430 aa).

Residues 1 to 223 (MSISVVILAA…EEEFKGVNSK (223 aa)) form a pyrophosphorylase region. UDP-N-acetyl-alpha-D-glucosamine contacts are provided by residues 8-11 (LAAG), lysine 22, and 81-82 (GT). Aspartate 102 contacts Mg(2+). 4 residues coordinate UDP-N-acetyl-alpha-D-glucosamine: glycine 135, glutamate 149, asparagine 164, and asparagine 221. Asparagine 221 is a binding site for Mg(2+). Residues 224–244 (LDLARAEEIMQRRIKEALMMA) form a linker region. Residues 245 to 430 (GVTMCLPETI…NFFYKFFGDK (186 aa)) are N-acetyltransferase. UDP-N-acetyl-alpha-D-glucosamine-binding residues include arginine 308 and lysine 325. Histidine 336 (proton acceptor) is an active-site residue. The UDP-N-acetyl-alpha-D-glucosamine site is built by tyrosine 339 and asparagine 350. Residues alanine 353, 359-360 (NY), serine 378, alanine 396, and arginine 413 each bind acetyl-CoA.

This sequence in the N-terminal section; belongs to the N-acetylglucosamine-1-phosphate uridyltransferase family. It in the C-terminal section; belongs to the transferase hexapeptide repeat family. In terms of assembly, homotrimer. Mg(2+) serves as cofactor.

The protein localises to the cytoplasm. It catalyses the reaction alpha-D-glucosamine 1-phosphate + acetyl-CoA = N-acetyl-alpha-D-glucosamine 1-phosphate + CoA + H(+). The catalysed reaction is N-acetyl-alpha-D-glucosamine 1-phosphate + UTP + H(+) = UDP-N-acetyl-alpha-D-glucosamine + diphosphate. It participates in nucleotide-sugar biosynthesis; UDP-N-acetyl-alpha-D-glucosamine biosynthesis; N-acetyl-alpha-D-glucosamine 1-phosphate from alpha-D-glucosamine 6-phosphate (route II): step 2/2. It functions in the pathway nucleotide-sugar biosynthesis; UDP-N-acetyl-alpha-D-glucosamine biosynthesis; UDP-N-acetyl-alpha-D-glucosamine from N-acetyl-alpha-D-glucosamine 1-phosphate: step 1/1. Its pathway is bacterial outer membrane biogenesis; LPS lipid A biosynthesis. Its function is as follows. Catalyzes the last two sequential reactions in the de novo biosynthetic pathway for UDP-N-acetylglucosamine (UDP-GlcNAc). The C-terminal domain catalyzes the transfer of acetyl group from acetyl coenzyme A to glucosamine-1-phosphate (GlcN-1-P) to produce N-acetylglucosamine-1-phosphate (GlcNAc-1-P), which is converted into UDP-GlcNAc by the transfer of uridine 5-monophosphate (from uridine 5-triphosphate), a reaction catalyzed by the N-terminal domain. The polypeptide is Bifunctional protein GlmU (Sulfurovum sp. (strain NBC37-1)).